A 246-amino-acid polypeptide reads, in one-letter code: Protein 3F (246 aa).

The first 19 residues, 1–19 (MKLLSKLILTLALATYASA), serve as a signal peptide directing secretion. N-linked (GlcNAc...) asparagine glycosylation occurs at N52. Residues 113–124 (EVRPIDRLKDNA) are compositionally biased toward basic and acidic residues. A disordered region spans residues 113–223 (EVRPIDRLKD…EEAEHVEKGA (111 aa)). Polar residues predominate over residues 126–145 (AANTENAQKSPNTQSTQKGS). 3 repeat units span residues 145 to 153 (SPKSDAKEA), 154 to 162 (SPKTDAKEA), and 163 to 171 (SPKSDAKEA). The segment at 145–176 (SPKSDAKEASPKTDAKEASPKSDAKEASPKTD) is 3.5 X 9 AA tandem repeats of S-P-K-[ST]-D-A-K-E-A. The segment covering 146 to 177 (PKSDAKEASPKTDAKEASPKSDAKEASPKTDT) has biased composition (basic and acidic residues). Residues 172–176 (SPKTD) form a 4; truncated repeat. A compositionally biased stretch (low complexity) spans 181–213 (SSPKTDTKSSTQKPSSSSDSSKAKAEANTAANN).

This is Protein 3F (pspG) from Dictyostelium discoideum (Social amoeba).